The sequence spans 111 residues: Ribonuclease P protein component (111 aa).

It belongs to the RnpA family. As to quaternary structure, consists of a catalytic RNA component (M1 or rnpB) and a protein subunit.

The enzyme catalyses Endonucleolytic cleavage of RNA, removing 5'-extranucleotides from tRNA precursor.. In terms of biological role, RNaseP catalyzes the removal of the 5'-leader sequence from pre-tRNA to produce the mature 5'-terminus. It can also cleave other RNA substrates such as 4.5S RNA. The protein component plays an auxiliary but essential role in vivo by binding to the 5'-leader sequence and broadening the substrate specificity of the ribozyme. In Mycoplasmopsis pulmonis (strain UAB CTIP) (Mycoplasma pulmonis), this protein is Ribonuclease P protein component.